Here is an 876-residue protein sequence, read N- to C-terminus: Leucine--tRNA ligase (876 aa).

A 'HIGH' region motif is present at residues P43–H53. The short motif at K632 to S636 is the 'KMSKS' region element. K635 contacts ATP.

Belongs to the class-I aminoacyl-tRNA synthetase family.

It localises to the cytoplasm. The catalysed reaction is tRNA(Leu) + L-leucine + ATP = L-leucyl-tRNA(Leu) + AMP + diphosphate. The chain is Leucine--tRNA ligase from Allorhizobium ampelinum (strain ATCC BAA-846 / DSM 112012 / S4) (Agrobacterium vitis (strain S4)).